Consider the following 393-residue polypeptide: Chalcone synthase DIII (393 aa).

Cysteine 164 is a catalytic residue.

Belongs to the thiolase-like superfamily. Chalcone/stilbene synthases family.

It carries out the reaction (E)-4-coumaroyl-CoA + 3 malonyl-CoA + 3 H(+) = 2',4,4',6'-tetrahydroxychalcone + 3 CO2 + 4 CoA. The protein operates within secondary metabolite biosynthesis; flavonoid biosynthesis. In terms of biological role, the primary product of this enzyme is 4,2',4',6'-tetrahydroxychalcone (also termed naringenin-chalcone or chalcone) which can under specific conditions spontaneously isomerize into naringenin. This Ipomoea batatas (Sweet potato) protein is Chalcone synthase DIII (CHS-DIII).